The primary structure comprises 255 residues: Type III pantothenate kinase (255 aa).

6–13 serves as a coordination point for ATP; sequence DVGNTNTV. Substrate-binding positions include Tyr100 and 107–110; that span reads GADR. Asp109 (proton acceptor) is an active-site residue. Asp129 contacts K(+). Thr132 serves as a coordination point for ATP. Thr184 is a substrate binding site.

Belongs to the type III pantothenate kinase family. Homodimer. The cofactor is NH4(+). K(+) serves as cofactor.

The protein localises to the cytoplasm. It catalyses the reaction (R)-pantothenate + ATP = (R)-4'-phosphopantothenate + ADP + H(+). It participates in cofactor biosynthesis; coenzyme A biosynthesis; CoA from (R)-pantothenate: step 1/5. In terms of biological role, catalyzes the phosphorylation of pantothenate (Pan), the first step in CoA biosynthesis. The sequence is that of Type III pantothenate kinase from Syntrophomonas wolfei subsp. wolfei (strain DSM 2245B / Goettingen).